The primary structure comprises 175 residues: Co-chaperone protein HscB homolog (175 aa).

One can recognise a J domain in the interval 7-79; that stretch reads SHFALFNLPE…LKRARYLLSL (73 aa).

This sequence belongs to the HscB family. As to quaternary structure, interacts with HscA and stimulates its ATPase activity.

In terms of biological role, co-chaperone involved in the maturation of iron-sulfur cluster-containing proteins. Seems to help targeting proteins to be folded toward HscA. The sequence is that of Co-chaperone protein HscB homolog from Paraburkholderia phymatum (strain DSM 17167 / CIP 108236 / LMG 21445 / STM815) (Burkholderia phymatum).